A 248-amino-acid polypeptide reads, in one-letter code: Pyridoxine 5'-phosphate synthase (248 aa).

Asparagine 7 is a binding site for 3-amino-2-oxopropyl phosphate. 1-deoxy-D-xylulose 5-phosphate is bound at residue 9 to 10 (DH). Residue arginine 18 participates in 3-amino-2-oxopropyl phosphate binding. Residue histidine 43 is the Proton acceptor of the active site. 1-deoxy-D-xylulose 5-phosphate contacts are provided by arginine 45 and histidine 50. The active-site Proton acceptor is glutamate 70. Threonine 100 contributes to the 1-deoxy-D-xylulose 5-phosphate binding site. Histidine 191 functions as the Proton donor in the catalytic mechanism. Residues glycine 192 and 213–214 (GH) contribute to the 3-amino-2-oxopropyl phosphate site.

The protein belongs to the PNP synthase family. In terms of assembly, homooctamer; tetramer of dimers.

The protein localises to the cytoplasm. It carries out the reaction 3-amino-2-oxopropyl phosphate + 1-deoxy-D-xylulose 5-phosphate = pyridoxine 5'-phosphate + phosphate + 2 H2O + H(+). The protein operates within cofactor biosynthesis; pyridoxine 5'-phosphate biosynthesis; pyridoxine 5'-phosphate from D-erythrose 4-phosphate: step 5/5. Its function is as follows. Catalyzes the complicated ring closure reaction between the two acyclic compounds 1-deoxy-D-xylulose-5-phosphate (DXP) and 3-amino-2-oxopropyl phosphate (1-amino-acetone-3-phosphate or AAP) to form pyridoxine 5'-phosphate (PNP) and inorganic phosphate. This chain is Pyridoxine 5'-phosphate synthase, found in Bordetella bronchiseptica (strain ATCC BAA-588 / NCTC 13252 / RB50) (Alcaligenes bronchisepticus).